Here is a 98-residue protein sequence, read N- to C-terminus: Class II hydrophobin 5 (98 aa).

The first 17 residues, 1 to 17 (MQFSLALVTLLATAVSA), serve as a signal peptide directing secretion. Cystine bridges form between cysteine 30/cysteine 78, cysteine 39/cysteine 69, cysteine 40/cysteine 52, and cysteine 79/cysteine 90.

The protein belongs to the cerato-ulmin hydrophobin family.

Its subcellular location is the secreted. The protein localises to the cell wall. In terms of biological role, aerial growth, conidiation, and dispersal of filamentous fungi in the environment rely upon a capability of their secreting small amphipathic proteins called hydrophobins (HPBs) with low sequence identity. Class I can self-assemble into an outermost layer of rodlet bundles on aerial cell surfaces, conferring cellular hydrophobicity that supports fungal growth, development and dispersal; whereas Class II form highly ordered films at water-air interfaces through intermolecular interactions but contribute nothing to the rodlet structure. Does not seem to be important for the ability to cause seedling disease. The sequence is that of Class II hydrophobin 5 from Gibberella moniliformis (Maize ear and stalk rot fungus).